The primary structure comprises 1182 residues: NACHT, LRR and PYD domains-containing protein 1a (1182 aa).

Residues 1-23 (MEESQSKQESSTKVAQHEGQEDV) are disordered. An NACHT domain is found at 133–442 (QLVIIEGAAG…EFFAAMSYIL (310 aa)). 139–146 (GAAGIGKS) contributes to the ATP binding site. 3 LRR repeats span residues 634-655 (NLEE…SLCT), 691-711 (SLTE…KMLC), and 720-743 (NLSI…RTLE). A disordered region spans residues 780–806 (QQRQQSGDKHMEPLGTEDEFWGPTGPV). The segment at 799–932 (FWGPTGPVTT…HYAVLENPSF (134 aa)) is ZU5. One can recognise an FIIND domain in the interval 799–1082 (FWGPTGPVTT…LRPALPKIAT (284 aa)). The UPA stretch occupies residues 933-1082 (SPMGILLRMI…LRPALPKIAT (150 aa)). Residues 1092-1175 (HFMDQHREQL…HLVMDILEKL (84 aa)) form the CARD domain.

This sequence belongs to the NLRP family. Interacts (via LRR repeats) with BCL2 and BCL2L1 (via the loop between motifs BH4 and BH3). Interacts with NOD2; this interaction is enhanced in the presence of muramyl dipeptide (MDP) and increases IL1B release. Interacts with EIF2AK2/PKR; this interaction requires EIF2AK2 activity, is accompanied by EIF2AK2 autophosphorylation and promotes inflammasome assembly in response to danger-associated signals. Interacts with MEFV; this interaction targets Nlrp1a to degradation by autophagy, hence preventing excessive IL1B- and IL18-mediated inflammation. Interacts with DPP9; leading to inhibit activation of the inflammasome. DPP9 acts via formation of a ternary complex, composed of a DPP9 homodimer, one full-length Nlrp1a protein, and one cleaved C-terminus of Nlrp1a (NACHT, LRR and PYD domains-containing protein 1a, C-terminus). Interacts with DPP8; leading to inhibit activation of the inflammasome, probably via formation of a ternary complex with DPP8. In terms of assembly, interacts with the C-terminal part of Nlrp1a (NACHT, LRR and PYD domains-containing protein 1a, C-terminus) in absence of pathogens and other damage-associated signals. As to quaternary structure, interacts with the N-terminal part of Nlrp1a (NACHT, LRR and PYD domains-containing protein 1a, N-terminus) in absence of pathogens and other damage-associated signals. Homomultimer; forms the Nlrp1a inflammasome polymeric complex, a filament composed of homopolymers of this form in response to pathogens and other damage-associated signals. Interacts (via CARD domain) with CASP1 (via CARD domain); leading to CASP1 activation. Post-translationally, autocatalytically cleaved. Autocatalytic cleavage in FIIND region occurs constitutively, prior to activation signals, and is required for inflammasome activity (IL1B release), possibly by facilitating CASP1 binding. Both N- and C-terminal parts remain associated non-covalently. Ubiquitinated in response to pathogen-associated signals, leading to its degradation by the proteasome and subsequent release of the cleaved C-terminal part of the protein (NACHT, LRR and PYD domains-containing protein 1a, C-terminus), which polymerizes and forms the Nlrp1a inflammasome. Highly expressed in hematopoietic stem cells and progenitor cells of both myeloid and lymphoid origin. The expression is highly strain-dependent. Not expressed in Balb/cJ animals, but widely expressed in C57BL/6J. Expressed in macrophages resistant to Bacillus anthracis lethal toxin, but not in toxin-sensitive macrophages, except in CAST/EiJ strain.

It is found in the cytoplasm. The protein resides in the cytosol. The protein localises to the nucleus. Its subcellular location is the inflammasome. With respect to regulation, nlrp1a inflammasome is activated by pathogens and other damage-associated signals: activation promotes ubiquitination and degradation of the N-terminal part, releasing the cleaved C-terminal part of the protein (NACHT, LRR and PYD domains-containing protein 1a, C-terminus), which polymerizes and forms the Nlrp1a inflammasome. Nlrp1a inflammasome is inhibited by DPP8 and DPP9, which sequester the C-terminal fragment of Nlrp1a (NACHT, LRR and PYD domains-containing protein 1a, C-terminus) in a ternary complex, thereby preventing Nlrp1a oligomerization and activation. Nlrp1a inflammasome is activated by Val-boroPro (Talabostat, PT-100), an inhibitor of dipeptidyl peptidases DPP8 and DPP9. Val-boroPro relieves inhibition of DPP8 and/or DPP9 by promoting disruption of the ternary complex, releasing its C-terminal part from autoinhibition. Functionally, acts as the sensor component of the Nlrp1a inflammasome, which mediates inflammasome activation in response to various pathogen-associated signals, leading to subsequent pyroptosis. Inflammasomes are supramolecular complexes that assemble in the cytosol in response to pathogens and other damage-associated signals and play critical roles in innate immunity and inflammation. Acts as a recognition receptor (PRR): recognizes specific pathogens and other damage-associated signals, and mediates the formation of the inflammasome polymeric complex. In response to pathogen-associated signals, the N-terminal part of Nlrp1a is degraded by the proteasome, releasing the cleaved C-terminal part of the protein (NACHT, LRR and PYD domains-containing protein 1a, C-terminus), which polymerizes to initiate the formation of the inflammasome complex: the inflammasome recruits pro-caspase-1 (proCASP1) and promotes caspase-1 (CASP1) activation, which subsequently cleaves and activates inflammatory cytokines IL1B and IL18 and gasdermin-D (GSDMD), leading to pyroptosis. In the absence of GSDMD expression, the Nlrp1a inflammasome is able to recruit and activate CASP8, leading to activation of gasdermin-E (GSDME). Activation of Nlrp1a inflammasome is also required for HMGB1 secretion; the active cytokines and HMGB1 stimulate inflammatory responses. When activated in the bone marrow, induces the pyroptosis of hematopoietic stem cells and progenitor cells of both myeloid and lymphoid lineages, hence allowing the removal of damaged cells, and the release of IL1B, which induces granulopoiesis. In terms of biological role, constitutes the precursor of the Nlrp1a inflammasome, which mediates autoproteolytic processing within the FIIND domain to generate the N-terminal and C-terminal parts, which are associated non-covalently in absence of pathogens and other damage-associated signals. Regulatory part that prevents formation of the Nlrp1a inflammasome: in absence of pathogens and other damage-associated signals, interacts with the C-terminal part of Nlrp1a (NACHT, LRR and PYD domains-containing protein 1a, C-terminus), preventing activation of the Nlrp1a inflammasome. In response to pathogen-associated signals, this part is ubiquitinated and degraded by the proteasome, releasing the cleaved C-terminal part of the protein, which polymerizes and forms the Nlrp1a inflammasome. Its function is as follows. Constitutes the active part of the Nlrp1a inflammasome. In absence of pathogens and other damage-associated signals, interacts with the N-terminal part of Nlrp1a (NACHT, LRR and PYD domains-containing protein 1a, N-terminus), preventing activation of the Nlrp1a inflammasome. In response to pathogen-associated signals, the N-terminal part of Nlrp1a is degraded by the proteasome, releasing this form, which polymerizes to form the Nlrp1a inflammasome complex: the Nlrp1a inflammasome complex then directly recruits pro-caspase-1 (proCASP1) and promotes caspase-1 (CASP1) activation, leading to gasdermin-D (GSDMD) cleavage and subsequent pyroptosis. This is NACHT, LRR and PYD domains-containing protein 1a from Mus musculus (Mouse).